The following is a 269-amino-acid chain: Expansin-A32 (269 aa).

An N-terminal signal peptide occupies residues methionine 1–alanine 25. The Expansin-like EG45 domain maps to aspartate 60 to glycine 174. Residues tyrosine 184 to alanine 264 enclose the Expansin-like CBD domain.

This sequence belongs to the expansin family. Expansin A subfamily.

The protein localises to the secreted. It is found in the cell wall. The protein resides in the membrane. Functionally, may cause loosening and extension of plant cell walls by disrupting non-covalent bonding between cellulose microfibrils and matrix glucans. No enzymatic activity has been found. May be required for rapid internodal elongation in deepwater rice during submergence. The chain is Expansin-A32 (EXPA32) from Oryza sativa subsp. japonica (Rice).